A 163-amino-acid chain; its full sequence is 5-hydroxymethyl-dUMP N-hydrolase (163 aa).

Alanine 2 carries the post-translational modification N-acetylalanine. Glycine 16 provides a ligand contact to 5-hydroxymethyl-dUMP. Serine 17 carries the phosphoserine modification. The 5-hydroxymethyl-dUMP site is built by isoleucine 18, arginine 19, glycine 20, serine 87, glycine 89, and glutamate 93. Residue serine 87 is modified to Phosphoserine. Phosphoserine is present on residues serine 112, serine 117, serine 127, and serine 158. A 5-hydroxymethyl-dUMP-binding site is contributed by serine 117.

As to quaternary structure, monomer and homodimer. In terms of tissue distribution, highly expressed in heart, kidney, liver and spleen. Weakly expressed in lung and skeletal muscle.

Its subcellular location is the cytoplasm. The protein resides in the nucleus. It carries out the reaction 5-hydroxymethyl-dUMP + H2O = 5-hydroxymethyluracil + 2-deoxy-D-ribose 5-phosphate. Its function is as follows. Part of a nucleotide salvage pathway that eliminates epigenetically modified 5-hydroxymethyl-dCMP (hmdCMP) in a two-step process entailing deamination to cytotoxic 5-hydroxymethyl-dUMP (hmdUMP), followed by its hydrolysis into 5-hydroxymethyluracil (hmU) and 2-deoxy-D-ribose 5-phosphate (deoxyribosephosphate). Catalyzes the second step in that pathway, the hydrolysis of the N-glycosidic bond in hmdUMP, degrading this cytotoxic nucleotide to avoid its genomic integration. The sequence is that of 5-hydroxymethyl-dUMP N-hydrolase from Rattus norvegicus (Rat).